We begin with the raw amino-acid sequence, 468 residues long: Microtubule-associated tyrosine carboxypeptidase 1 (468 aa).

A compositionally biased stretch (polar residues) spans 1–10 (MVLDSGTQVY). Disordered regions lie at residues 1–39 (MVLDSGTQVYEQAPPSPPASSPSQHHKLKPSNRNGPPLY) and 77–112 (MKRSESTYSVNSTGRRGRGKAPLGRGCDPGGGTLRP). Residue His277 coordinates Zn(2+). The active-site Nucleophile is Glu278. The Zn(2+) site is built by His282 and Glu313.

This sequence belongs to the peptidase MATCAP family. Zn(2+) serves as cofactor.

It localises to the cytoplasm. The protein resides in the cytoskeleton. It catalyses the reaction C-terminal L-alpha-aminoacyl-L-glutamyl-L-glutamyl-L-tyrosyl-[tubulin] + H2O = C-terminal L-alpha-aminoacyl-L-glutamyl-L-glutamyl-[tubulin] + L-tyrosine. The catalysed reaction is C-terminal L-alpha-aminoacyl-L-glutamyl-L-glutamyl-L-phenylalanyl-[tubulin] + H2O = C-terminal L-alpha-aminoacyl-L-glutamyl-L-glutamyl-[tubulin] + L-phenylalanine. In terms of biological role, tyrosine carboxypeptidase that removes the C-terminal tyrosine residue of alpha-tubulin, thereby regulating microtubule dynamics and function. Also able to remove the C-terminal phenylalanine residue of alpha-tubulin TUBA8. Recognizes adjacent tubulin dimers along the same protofilament. This chain is Microtubule-associated tyrosine carboxypeptidase 1, found in Rattus norvegicus (Rat).